A 362-amino-acid chain; its full sequence is Phosphoserine aminotransferase (362 aa).

2 residues coordinate L-glutamate: Ser-9 and Arg-42. Pyridoxal 5'-phosphate is bound by residues Gly-76–Arg-77, Trp-102, Thr-153, Asp-174, and Gln-197. Lys-198 carries the post-translational modification N6-(pyridoxal phosphate)lysine. A pyridoxal 5'-phosphate-binding site is contributed by Asn-239–Thr-240.

Belongs to the class-V pyridoxal-phosphate-dependent aminotransferase family. SerC subfamily. Homodimer. It depends on pyridoxal 5'-phosphate as a cofactor.

The protein localises to the cytoplasm. It catalyses the reaction O-phospho-L-serine + 2-oxoglutarate = 3-phosphooxypyruvate + L-glutamate. The catalysed reaction is 4-(phosphooxy)-L-threonine + 2-oxoglutarate = (R)-3-hydroxy-2-oxo-4-phosphooxybutanoate + L-glutamate. It participates in amino-acid biosynthesis; L-serine biosynthesis; L-serine from 3-phospho-D-glycerate: step 2/3. The protein operates within cofactor biosynthesis; pyridoxine 5'-phosphate biosynthesis; pyridoxine 5'-phosphate from D-erythrose 4-phosphate: step 3/5. Catalyzes the reversible conversion of 3-phosphohydroxypyruvate to phosphoserine and of 3-hydroxy-2-oxo-4-phosphonooxybutanoate to phosphohydroxythreonine. The sequence is that of Phosphoserine aminotransferase from Escherichia fergusonii (strain ATCC 35469 / DSM 13698 / CCUG 18766 / IAM 14443 / JCM 21226 / LMG 7866 / NBRC 102419 / NCTC 12128 / CDC 0568-73).